We begin with the raw amino-acid sequence, 544 residues long: Chaperonin GroEL (544 aa).

ATP-binding positions include 29-32 (TLGP), Lys-50, 86-90 (DGTTT), Gly-414, and Asp-494.

This sequence belongs to the chaperonin (HSP60) family. As to quaternary structure, forms a cylinder of 14 subunits composed of two heptameric rings stacked back-to-back. Interacts with the co-chaperonin GroES.

The protein localises to the cytoplasm. The enzyme catalyses ATP + H2O + a folded polypeptide = ADP + phosphate + an unfolded polypeptide.. In terms of biological role, together with its co-chaperonin GroES, plays an essential role in assisting protein folding. The GroEL-GroES system forms a nano-cage that allows encapsulation of the non-native substrate proteins and provides a physical environment optimized to promote and accelerate protein folding. The polypeptide is Chaperonin GroEL (Amoebophilus asiaticus (strain 5a2)).